Here is a 315-residue protein sequence, read N- to C-terminus: Tyrosine recombinase XerC (315 aa).

One can recognise a Core-binding (CB) domain in the interval 1-103; it reads MIASFYAFLD…AIKSFAKFCV (103 aa). Residues 124 to 306 form the Tyr recombinase domain; it reads ELPSPLTYEQ…SMKLKKQIHD (183 aa). Active-site residues include Arg164, Lys188, His258, Arg261, and His284. Residue Tyr293 is the O-(3'-phospho-DNA)-tyrosine intermediate of the active site.

Belongs to the 'phage' integrase family. XerC subfamily. As to quaternary structure, forms a cyclic heterotetrameric complex composed of two molecules of XerC and two molecules of XerD.

The protein localises to the cytoplasm. Functionally, site-specific tyrosine recombinase, which acts by catalyzing the cutting and rejoining of the recombining DNA molecules. The XerC-XerD complex is essential to convert dimers of the bacterial chromosome into monomers to permit their segregation at cell division. It also contributes to the segregational stability of plasmids. The protein is Tyrosine recombinase XerC of Chlamydia muridarum (strain MoPn / Nigg).